A 330-amino-acid chain; its full sequence is Ketol-acid reductoisomerase (NADP(+)) (330 aa).

Residues 2–182 (VETFYEKDAD…GCTRAGVIKT (181 aa)) form the KARI N-terminal Rossmann domain. NADP(+)-binding positions include 25 to 28 (YGSQ), Lys48, Ser51, Ser53, and 83 to 86 (DEVQ). The active site involves His108. Position 134 (Gly134) interacts with NADP(+). The region spanning 183 to 328 (TFKEETETDL…EKLRAMMPWI (146 aa)) is the KARI C-terminal knotted domain. Positions 191, 195, 227, and 231 each coordinate Mg(2+). Ser252 lines the substrate pocket.

The protein belongs to the ketol-acid reductoisomerase family. Requires Mg(2+) as cofactor.

The enzyme catalyses (2R)-2,3-dihydroxy-3-methylbutanoate + NADP(+) = (2S)-2-acetolactate + NADPH + H(+). The catalysed reaction is (2R,3R)-2,3-dihydroxy-3-methylpentanoate + NADP(+) = (S)-2-ethyl-2-hydroxy-3-oxobutanoate + NADPH + H(+). It participates in amino-acid biosynthesis; L-isoleucine biosynthesis; L-isoleucine from 2-oxobutanoate: step 2/4. The protein operates within amino-acid biosynthesis; L-valine biosynthesis; L-valine from pyruvate: step 2/4. Functionally, involved in the biosynthesis of branched-chain amino acids (BCAA). Catalyzes an alkyl-migration followed by a ketol-acid reduction of (S)-2-acetolactate (S2AL) to yield (R)-2,3-dihydroxy-isovalerate. In the isomerase reaction, S2AL is rearranged via a Mg-dependent methyl migration to produce 3-hydroxy-3-methyl-2-ketobutyrate (HMKB). In the reductase reaction, this 2-ketoacid undergoes a metal-dependent reduction by NADPH to yield (R)-2,3-dihydroxy-isovalerate. The chain is Ketol-acid reductoisomerase (NADP(+)) from Petrotoga mobilis (strain DSM 10674 / SJ95).